The following is a 254-amino-acid chain: Ribosomal RNA small subunit methyltransferase J (254 aa).

S-adenosyl-L-methionine is bound by residues Arg106–Asp107 and Asp177.

Belongs to the methyltransferase superfamily. RsmJ family.

It localises to the cytoplasm. It catalyses the reaction guanosine(1516) in 16S rRNA + S-adenosyl-L-methionine = N(2)-methylguanosine(1516) in 16S rRNA + S-adenosyl-L-homocysteine + H(+). Its function is as follows. Specifically methylates the guanosine in position 1516 of 16S rRNA. The sequence is that of Ribosomal RNA small subunit methyltransferase J from Nitrosococcus oceani (strain ATCC 19707 / BCRC 17464 / JCM 30415 / NCIMB 11848 / C-107).